The chain runs to 409 residues: ORC1-type DNA replication protein 1 (409 aa).

ATP is bound by residues 63 to 67, Y206, and R218; that span reads TGKTA.

Belongs to the CDC6/cdc18 family.

Functionally, involved in regulation of DNA replication. In Archaeoglobus fulgidus (strain ATCC 49558 / DSM 4304 / JCM 9628 / NBRC 100126 / VC-16), this protein is ORC1-type DNA replication protein 1 (cdc6-1).